The sequence spans 86 residues: Small ribosomal subunit protein uS17 (86 aa).

The protein belongs to the universal ribosomal protein uS17 family. As to quaternary structure, part of the 30S ribosomal subunit.

Its function is as follows. One of the primary rRNA binding proteins, it binds specifically to the 5'-end of 16S ribosomal RNA. In Desulfitobacterium hafniense (strain DSM 10664 / DCB-2), this protein is Small ribosomal subunit protein uS17.